A 278-amino-acid polypeptide reads, in one-letter code: Tryptophan synthase alpha chain (278 aa).

Catalysis depends on proton acceptor residues Glu49 and Asp60.

It belongs to the TrpA family. Tetramer of two alpha and two beta chains.

The catalysed reaction is (1S,2R)-1-C-(indol-3-yl)glycerol 3-phosphate + L-serine = D-glyceraldehyde 3-phosphate + L-tryptophan + H2O. Its pathway is amino-acid biosynthesis; L-tryptophan biosynthesis; L-tryptophan from chorismate: step 5/5. Its function is as follows. The alpha subunit is responsible for the aldol cleavage of indoleglycerol phosphate to indole and glyceraldehyde 3-phosphate. The protein is Tryptophan synthase alpha chain of Corynebacterium diphtheriae (strain ATCC 700971 / NCTC 13129 / Biotype gravis).